Here is a 180-residue protein sequence, read N- to C-terminus: Large ribosomal subunit protein uL5 (180 aa).

This sequence belongs to the universal ribosomal protein uL5 family. In terms of assembly, part of the 50S ribosomal subunit; part of the 5S rRNA/L5/L18/L25 subcomplex. Contacts the 5S rRNA and the P site tRNA. Forms a bridge to the 30S subunit in the 70S ribosome.

Functionally, this is one of the proteins that bind and probably mediate the attachment of the 5S RNA into the large ribosomal subunit, where it forms part of the central protuberance. In the 70S ribosome it contacts protein S13 of the 30S subunit (bridge B1b), connecting the 2 subunits; this bridge is implicated in subunit movement. Contacts the P site tRNA; the 5S rRNA and some of its associated proteins might help stabilize positioning of ribosome-bound tRNAs. The polypeptide is Large ribosomal subunit protein uL5 (Lactococcus lactis subsp. lactis (strain IL1403) (Streptococcus lactis)).